The following is a 309-amino-acid chain: tRNA uridine(34) hydroxylase (309 aa).

The Rhodanese domain occupies 123–217 (DDPEVIVVDT…YLEEVPEEQT (95 aa)). Residue C177 is the Cysteine persulfide intermediate of the active site.

Belongs to the TrhO family.

It carries out the reaction uridine(34) in tRNA + AH2 + O2 = 5-hydroxyuridine(34) in tRNA + A + H2O. In terms of biological role, catalyzes oxygen-dependent 5-hydroxyuridine (ho5U) modification at position 34 in tRNAs. This chain is tRNA uridine(34) hydroxylase, found in Saccharophagus degradans (strain 2-40 / ATCC 43961 / DSM 17024).